The primary structure comprises 426 residues: 3-phosphoshikimate 1-carboxyvinyltransferase (426 aa).

3-phosphoshikimate-binding residues include lysine 21, serine 22, and arginine 26. Residue lysine 21 coordinates phosphoenolpyruvate. 2 residues coordinate phosphoenolpyruvate: glycine 91 and arginine 119. 6 residues coordinate 3-phosphoshikimate: serine 162, serine 163, glutamine 164, serine 190, aspartate 304, and lysine 331. Phosphoenolpyruvate is bound at residue glutamine 164. Residue aspartate 304 is the Proton acceptor of the active site. Residues arginine 335, arginine 377, and lysine 403 each coordinate phosphoenolpyruvate.

Belongs to the EPSP synthase family. Monomer.

The protein localises to the cytoplasm. The enzyme catalyses 3-phosphoshikimate + phosphoenolpyruvate = 5-O-(1-carboxyvinyl)-3-phosphoshikimate + phosphate. It participates in metabolic intermediate biosynthesis; chorismate biosynthesis; chorismate from D-erythrose 4-phosphate and phosphoenolpyruvate: step 6/7. Catalyzes the transfer of the enolpyruvyl moiety of phosphoenolpyruvate (PEP) to the 5-hydroxyl of shikimate-3-phosphate (S3P) to produce enolpyruvyl shikimate-3-phosphate and inorganic phosphate. The polypeptide is 3-phosphoshikimate 1-carboxyvinyltransferase (Clostridium kluyveri (strain ATCC 8527 / DSM 555 / NBRC 12016 / NCIMB 10680 / K1)).